Here is a 376-residue protein sequence, read N- to C-terminus: N-acetyldiaminopimelate deacetylase (376 aa).

The active site involves Asp69. The Proton acceptor role is filled by Glu128.

Belongs to the peptidase M20A family. N-acetyldiaminopimelate deacetylase subfamily.

It carries out the reaction N-acetyl-(2S,6S)-2,6-diaminopimelate + H2O = (2S,6S)-2,6-diaminopimelate + acetate. It functions in the pathway amino-acid biosynthesis; L-lysine biosynthesis via DAP pathway; LL-2,6-diaminopimelate from (S)-tetrahydrodipicolinate (acetylase route): step 3/3. Functionally, catalyzes the conversion of N-acetyl-diaminopimelate to diaminopimelate and acetate. The chain is N-acetyldiaminopimelate deacetylase from Bacillus cereus (strain G9842).